The sequence spans 305 residues: Protoheme IX farnesyltransferase 2 (305 aa).

7 consecutive transmembrane segments (helical) span residues 38-58 (LITT…SFLG), 60-80 (LNTV…SCAV), 115-135 (ILLI…AAVI), 157-177 (INTV…WTAV), 181-201 (IGVV…PHFL), 236-256 (VACL…IVIL), and 285-305 (FVYS…FTLF).

This sequence belongs to the UbiA prenyltransferase family. Protoheme IX farnesyltransferase subfamily. In terms of assembly, interacts with CtaA.

The protein localises to the cell membrane. The enzyme catalyses heme b + (2E,6E)-farnesyl diphosphate + H2O = Fe(II)-heme o + diphosphate. Its pathway is porphyrin-containing compound metabolism; heme O biosynthesis; heme O from protoheme: step 1/1. Converts heme B (protoheme IX) to heme O by substitution of the vinyl group on carbon 2 of heme B porphyrin ring with a hydroxyethyl farnesyl side group. The chain is Protoheme IX farnesyltransferase 2 from Bacillus velezensis (strain DSM 23117 / BGSC 10A6 / LMG 26770 / FZB42) (Bacillus amyloliquefaciens subsp. plantarum).